The sequence spans 148 residues: Pivalyl-CoA mutase small subunit (148 aa).

One can recognise a B12-binding domain in the interval P8–E138. Position 21 (H21) interacts with adenosylcob(III)alamin.

It belongs to the acyl-CoA mutase small subunit family. In terms of assembly, monomer in the absence of the PCM large subunit. Weakly interacts with the PCM large subunit; an alpha(2)beta(2) stoichiometry seems to represent the active state of the enzyme. Requires adenosylcob(III)alamin as cofactor.

The catalysed reaction is 3-methylbutanoyl-CoA = 2,2-dimethylpropanoyl-CoA. In terms of biological role, together with Xaut_5043, catalyzes the reversible isomerization between pivalyl-CoA and isovaleryl-CoA, using radical chemistry. Does not exhibit isobutyryl-CoA mutase (ICM) activity. In Xanthobacter autotrophicus (strain ATCC BAA-1158 / Py2), this protein is Pivalyl-CoA mutase small subunit.